Reading from the N-terminus, the 2108-residue chain is Mucin-5B (2108 aa).

A signal peptide spans 1–21 (MEIKKERSFWIFCLIWSFCKG). The region spanning 36-203 (SECTTWGNFH…KVEDPSEKCP (168 aa)) is the VWFD 1 domain. 2 disulfide bridges follow: Cys-38–Cys-166 and Cys-60–Cys-202. The segment at 196 to 219 (EDPSEKCPDVRPDDHTGRHPTEDD) is disordered. In terms of domain architecture, TIL 1 spans 304–360 (CPSNMEYMECGNSCADTCADPERSKICKAPCTDGCFCPPGTILDDLGGKKCVPRDSC). An N-linked (GlcNAc...) (complex) asparagine glycan is attached at Asn-381. The region spanning 398-570 (GSCSIDGGFH…NSWKTRASCF (173 aa)) is the VWFD 2 domain. 3 cysteine pairs are disulfide-bonded: Cys-400–Cys-534, Cys-422–Cys-569, and Cys-443–Cys-451. Residues Asn-528, Asn-599, Asn-680, and Asn-772 are each glycosylated (N-linked (GlcNAc...) (complex) asparagine). The TIL 2 domain maps to 666–723 (CPETMVYNYSVKYCNQSCRSLDEPDPLCKVQIAPMEGCGCPEGTYLNDEEECVTPDDC). Positions 782–825 (GSECQKSCKTQDMHCYVTECVSGCMCPDGLVLDGSGGCIPKDQC) constitute a TIL 3 domain. The 73-residue stretch at 825-897 (CPCVHGGHFY…DYILAQDFCP (73 aa)) folds into the VWFC 1 domain. A glycan (N-linked (GlcNAc...) (complex) asparagine) is linked at Asn-855. The VWFD 3 domain maps to 863–1033 (GTCTVYGNGH…NSWKITSTCS (171 aa)). 4 disulfide bridges follow: Cys-865–Cys-997, Cys-887–Cys-1032, Cys-896–Cys-994, and Cys-914–Cys-921. N-linked (GlcNAc...) (complex) asparagine glycosylation is found at Asn-1036, Asn-1219, Asn-1371, and Asn-1452. In terms of domain architecture, VWFD 4 spans 1429–1613 (CICSGWGNEH…APVSTNRYCN (185 aa)). Intrachain disulfides connect Cys-1431–Cys-1573, Cys-1453–Cys-1612, and Cys-1477–Cys-1485. Residues Asn-1567, Asn-1639, Asn-1792, Asn-1807, and Asn-1841 are each glycosylated (N-linked (GlcNAc...) (complex) asparagine). In terms of domain architecture, VWFC 2 spans 1761 to 1832 (CGCTAQDGSV…DPCCTETVCE (72 aa)). The 68-residue stretch at 1870-1937 (GVCVSEGVEF…KEGQCCSQCQ (68 aa)) folds into the VWFC 3 domain. Asn-1964 carries N-linked (GlcNAc...) (complex) asparagine glycosylation. Cystine bridges form between Cys-2010/Cys-2066, Cys-2031/Cys-2080, Cys-2042/Cys-2096, and Cys-2046/Cys-2098. Residues 2010 to 2104 (CIDLPHKCKR…ECGCVETKCP (95 aa)) enclose the CTCK domain.

As to quaternary structure, homomultimer; disulfide-linked. The N- and C-terminus mediate their assembly into higher order structures to form filaments. The CTCK domains of two polypeptides associate in the endoplasmic reticulum to generate intermolecularly disulfide-bonded dimers. These dimers progress to the Golgi apparatus, which is a more acidic environment than the endoplasmic reticulum. Under acidic conditions, the N-termini form non-covalent intermolecular interactions that juxtapose assemblies from different CTCK-linked dimers to produce long, disulfide-linked polymers that remain highly compact until secretion. Post-translationally, N-glycosylated. Complex glycosylation with bisecting N-acetylglucosamine. Contains mainly N-acetylglucosamine (3.1-8.5%), mannose (2.9-4.6%), a small amount of galactose (1.1-4.35) and sialic acid (0.3-1.3%). Most abundant glycan is composed of a GlcNAc(2)Man(3) core, a bisecting GlcNAc and another 3 GlcNAc antannae located on the mannoses of the core. Site Asn-1639 exists both in glycosylated and non-glycosylated forms.

It is found in the secreted. Functionally, ovomucin, the glycoprotein responsible for the gel properties of egg white, is composed for 2 subunits, alpha-ovomucin/MUC5B and beta-ovomucin/MUC6. This is Mucin-5B (MUC5B) from Gallus gallus (Chicken).